A 483-amino-acid polypeptide reads, in one-letter code: MEFRFNMHPLFRARIVRINNSLLPTGFVAQSRRVALDATAQISEIINTIGSMSAQAQGLSVPVTTAQKLRNSDHHIYLMFESNDRNGLVVGILKVGRKSLYVFDPSGETVNVTAPCVLDFYVHESRQRGGLGRELFEHMLREENIQPDELAIDRPSEKLLGFLQKHYGLSKKIPQMNNFVVYEGFFASKAQNSTDIDGRRMHITASPNTNLFGPTFTTTEERRRSTSQTRTNVAPMPIIAQPPVGRYAAKRPTCSMAQVNHYSSMVGKISFPEENTGNGKRSVFEEQELDQRLADEMERCVELGAGGDEPDASRYTPHHGLEVKFADQPETLPYDDMPEPGPDPDPYDFHPHHLELHDDTEGGGSHRDQSLSPQSVSQQASPVHPAGSDYGVLGSRKPARYTKQNTGLKNISFGVGAAVMPSGKMEFDQEENEGFGSVKINRPIGKSGTRGSLHDDNESVHSNGSQQGGGGHFDLKFYHNKLW.

The N-acetyltransferase domain maps to Met1 to Phe186. Acetyl-CoA is bound by residues Phe120 to Arg133 and Ser156 to Lys165. 3 disordered regions span residues Thr204–Thr231, Glu330–Ser395, and Ser437–His472. A compositionally biased stretch (basic and acidic residues) spans Tyr347 to Gln369. Residues Ser370 to Val383 show a composition bias toward low complexity.

The protein belongs to the acetyltransferase ATAT1 family.

It catalyses the reaction L-lysyl-[alpha-tubulin] + acetyl-CoA = N(6)-acetyl-L-lysyl-[alpha-tubulin] + CoA + H(+). In terms of biological role, specifically acetylates 'Lys-40' in alpha-tubulin on the lumenal side of microtubules. Promotes microtubule destabilization and accelerates microtubule dynamics; this activity may be independent of acetylation activity. Acetylates alpha-tubulin with a slow enzymatic rate, due to a catalytic site that is not optimized for acetyl transfer. Enters the microtubule through each end and diffuses quickly throughout the lumen of microtubules. Acetylates only long/old microtubules because of its slow acetylation rate since it does not have time to act on dynamically unstable microtubules before the enzyme is released. The chain is Alpha-tubulin N-acetyltransferase from Anopheles gambiae (African malaria mosquito).